The chain runs to 87 residues: Small ribosomal subunit protein bS18 (87 aa).

The protein belongs to the bacterial ribosomal protein bS18 family. Part of the 30S ribosomal subunit. Forms a tight heterodimer with protein bS6.

Binds as a heterodimer with protein bS6 to the central domain of the 16S rRNA, where it helps stabilize the platform of the 30S subunit. This chain is Small ribosomal subunit protein bS18, found in Nitratidesulfovibrio vulgaris (strain DSM 19637 / Miyazaki F) (Desulfovibrio vulgaris).